A 312-amino-acid polypeptide reads, in one-letter code: Malate dehydrogenase (312 aa).

NAD(+) is bound by residues 7–13 (GAAGGIG) and Asp-34. The substrate site is built by Arg-81 and Arg-87. Residues Asn-94 and 117-119 (ITN) contribute to the NAD(+) site. Positions 119 and 153 each coordinate substrate. His-177 serves as the catalytic Proton acceptor. Met-227 contacts NAD(+).

Belongs to the LDH/MDH superfamily. MDH type 1 family. Homodimer.

It catalyses the reaction (S)-malate + NAD(+) = oxaloacetate + NADH + H(+). Its function is as follows. Catalyzes the reversible oxidation of malate to oxaloacetate. The chain is Malate dehydrogenase from Escherichia coli (strain ATCC 8739 / DSM 1576 / NBRC 3972 / NCIMB 8545 / WDCM 00012 / Crooks).